Consider the following 524-residue polypeptide: Bifunctional purine biosynthesis protein PurH (524 aa).

The MGS-like domain maps to 1–149 (MSDPLIKRAL…KNNESVTVLT (149 aa)).

It belongs to the PurH family.

The catalysed reaction is (6R)-10-formyltetrahydrofolate + 5-amino-1-(5-phospho-beta-D-ribosyl)imidazole-4-carboxamide = 5-formamido-1-(5-phospho-D-ribosyl)imidazole-4-carboxamide + (6S)-5,6,7,8-tetrahydrofolate. The enzyme catalyses IMP + H2O = 5-formamido-1-(5-phospho-D-ribosyl)imidazole-4-carboxamide. It functions in the pathway purine metabolism; IMP biosynthesis via de novo pathway; 5-formamido-1-(5-phospho-D-ribosyl)imidazole-4-carboxamide from 5-amino-1-(5-phospho-D-ribosyl)imidazole-4-carboxamide (10-formyl THF route): step 1/1. Its pathway is purine metabolism; IMP biosynthesis via de novo pathway; IMP from 5-formamido-1-(5-phospho-D-ribosyl)imidazole-4-carboxamide: step 1/1. This chain is Bifunctional purine biosynthesis protein PurH, found in Chlorobium phaeovibrioides (strain DSM 265 / 1930) (Prosthecochloris vibrioformis (strain DSM 265)).